The sequence spans 221 residues: ATP-dependent dethiobiotin synthetase BioD (221 aa).

ATP is bound at residue 12 to 17 (EVGKTV). T16 is a Mg(2+) binding site. K39 is an active-site residue. T43 provides a ligand contact to substrate. ATP-binding positions include D47, 105 to 108 (EGLG), and 165 to 166 (SC). 2 residues coordinate Mg(2+): D47 and E105.

It belongs to the dethiobiotin synthetase family. In terms of assembly, homodimer. Requires Mg(2+) as cofactor.

It is found in the cytoplasm. It carries out the reaction (7R,8S)-7,8-diammoniononanoate + CO2 + ATP = (4R,5S)-dethiobiotin + ADP + phosphate + 3 H(+). The catalysed reaction is (7R,8S)-8-amino-7-(carboxyamino)nonanoate + ATP = (4R,5S)-dethiobiotin + ADP + phosphate + H(+). It functions in the pathway cofactor biosynthesis; biotin biosynthesis; biotin from 7,8-diaminononanoate: step 1/2. Its function is as follows. Catalyzes a mechanistically unusual reaction, the ATP-dependent insertion of CO2 between the N7 and N8 nitrogen atoms of 7,8-diaminopelargonic acid (DAPA, also called 7,8-diammoniononanoate) to form a ureido ring. This cyanobacterium does not encode bioA (which catalyzes the formation of the precursor for this reaction in the cannonical pathway), instead it encodes bioU, which replaces bioA and also performs the first half of the cannonical BioD reaction. Thus in this organism BioD has a different substrate. The protein is ATP-dependent dethiobiotin synthetase BioD of Crocosphaera subtropica (strain ATCC 51142 / BH68) (Cyanothece sp. (strain ATCC 51142)).